The chain runs to 152 residues: uncharacterized protein (152 aa).

This sequence belongs to the antirestriction protein family.

This is an uncharacterized protein from Escherichia coli (strain K12).